A 98-amino-acid chain; its full sequence is Large ribosomal subunit protein uL23 (98 aa).

Belongs to the universal ribosomal protein uL23 family. As to quaternary structure, part of the 50S ribosomal subunit. Contacts protein L29, and trigger factor when it is bound to the ribosome.

In terms of biological role, one of the early assembly proteins it binds 23S rRNA. One of the proteins that surrounds the polypeptide exit tunnel on the outside of the ribosome. Forms the main docking site for trigger factor binding to the ribosome. The chain is Large ribosomal subunit protein uL23 from Frankia alni (strain DSM 45986 / CECT 9034 / ACN14a).